The sequence spans 76 residues: Large ribosomal subunit protein eL20 (76 aa).

Belongs to the eukaryotic ribosomal protein eL20 family. As to quaternary structure, part of the 50S ribosomal subunit. Binds 23S rRNA.

This Methanocaldococcus jannaschii (strain ATCC 43067 / DSM 2661 / JAL-1 / JCM 10045 / NBRC 100440) (Methanococcus jannaschii) protein is Large ribosomal subunit protein eL20.